Consider the following 300-residue polypeptide: Fatty acid elongase 3 (300 aa).

A run of 3 helical transmembrane segments spans residues 31-51 (VPAVAVVLYLILVLYVPENVM), 61-81 (FLNMLWNLLLTVFSICGAYYC), and 127-147 (IFFDGFVGLWVAAFVLSKIPE). Positions 165 to 169 (HWYHH) match the HxxHH motif motif. H168 acts as the Nucleophile in catalysis. The next 4 helical transmembrane spans lie at 170–190 (ATVMLFCWHAYAYTISSGLWF), 192–212 (TMNYCVHSIMYFYYFMCACGM), 219–239 (IAPLITMMQILQMVAGTLIVL), and 261–283 (MGLLMYVSYLFLFSQLYYRSYIS).

The protein belongs to the ELO family.

Its subcellular location is the endoplasmic reticulum membrane. The enzyme catalyses an acyl-CoA + malonyl-CoA + H(+) = a 3-oxoacyl-CoA + CO2 + CoA. It participates in lipid metabolism; fatty acid biosynthesis. Its function is as follows. Involved in the synthesis of fatty acids. Elongates C14 fatty acids to C18. Required for the maintenance of the global lipidome profile in this parasite. In Trypanosoma cruzi (strain CL Brener), this protein is Fatty acid elongase 3.